Reading from the N-terminus, the 513-residue chain is GMP synthase [glutamine-hydrolyzing] (513 aa).

The Glutamine amidotransferase type-1 domain maps to 3–192 (TVVVLDYGSQ…VSKIAKMEKN (190 aa)). Cys-80 functions as the Nucleophile in the catalytic mechanism. Active-site residues include His-166 and Glu-168. The region spanning 193 to 388 (WEMKDFVSEK…LELPQSMINR (196 aa)) is the GMPS ATP-PPase domain. Residue 220–226 (SGGVDSS) participates in ATP binding.

As to quaternary structure, homodimer.

The catalysed reaction is XMP + L-glutamine + ATP + H2O = GMP + L-glutamate + AMP + diphosphate + 2 H(+). It participates in purine metabolism; GMP biosynthesis; GMP from XMP (L-Gln route): step 1/1. In terms of biological role, catalyzes the synthesis of GMP from XMP. In Thermosipho melanesiensis (strain DSM 12029 / CIP 104789 / BI429), this protein is GMP synthase [glutamine-hydrolyzing].